We begin with the raw amino-acid sequence, 883 residues long: DNA mismatch repair protein MutS (883 aa).

619–626 (GPNMGGKS) lines the ATP pocket.

The protein belongs to the DNA mismatch repair MutS family.

This protein is involved in the repair of mismatches in DNA. It is possible that it carries out the mismatch recognition step. This protein has a weak ATPase activity. The protein is DNA mismatch repair protein MutS of Marinomonas sp. (strain MWYL1).